Consider the following 548-residue polypeptide: Membrane protein insertase YidC (548 aa).

Residues 6–26 (NLLVIALLFVSFMIWQAWEQD) form a helical membrane-spanning segment. The segment at 28 to 58 (NPQPQQQQTTQTTTTAAGSAADQGVPASGQG) is disordered. Over residues 29–42 (PQPQQQQTTQTTTT) the composition is skewed to low complexity. A run of 4 helical transmembrane segments spans residues 350 to 370 (FLGNWGFSIIVITFIVRGIMY), 420 to 440 (LGGCFPLLIQMPIFLALYYML), 458 to 478 (LSAQDPYYILPILMGITMFFI), and 499 to 519 (PVIFTVFFLWFPSGLVLYYIV).

It belongs to the OXA1/ALB3/YidC family. Type 1 subfamily. As to quaternary structure, interacts with the Sec translocase complex via SecD. Specifically interacts with transmembrane segments of nascent integral membrane proteins during membrane integration.

It localises to the cell inner membrane. Functionally, required for the insertion and/or proper folding and/or complex formation of integral membrane proteins into the membrane. Involved in integration of membrane proteins that insert both dependently and independently of the Sec translocase complex, as well as at least some lipoproteins. Aids folding of multispanning membrane proteins. In Enterobacter sp. (strain 638), this protein is Membrane protein insertase YidC.